Here is a 226-residue protein sequence, read N- to C-terminus: 7-cyano-7-deazaguanine synthase (226 aa).

7–17 (LSGGMDSLVTT) lines the ATP pocket. The Zn(2+) site is built by C187, C195, C198, and C201.

It belongs to the QueC family. Zn(2+) is required as a cofactor.

It carries out the reaction 7-carboxy-7-deazaguanine + NH4(+) + ATP = 7-cyano-7-deazaguanine + ADP + phosphate + H2O + H(+). Its pathway is purine metabolism; 7-cyano-7-deazaguanine biosynthesis. Functionally, catalyzes the ATP-dependent conversion of 7-carboxy-7-deazaguanine (CDG) to 7-cyano-7-deazaguanine (preQ(0)). This chain is 7-cyano-7-deazaguanine synthase, found in Chlorobium phaeobacteroides (strain DSM 266 / SMG 266 / 2430).